The following is a 272-amino-acid chain: Shikimate dehydrogenase (NADP(+)) (272 aa).

Shikimate is bound by residues 14-16 and Thr61; that span reads SKS. The active-site Proton acceptor is Lys65. NADP(+) is bound at residue Glu77. Residues Asn86 and Asp102 each contribute to the shikimate site. Residues 126–130, 149–154, and Met213 each bind NADP(+); these read GAGGA and NRTASR. Tyr215 is a shikimate binding site. Gly237 contributes to the NADP(+) binding site.

The protein belongs to the shikimate dehydrogenase family. As to quaternary structure, homodimer.

It carries out the reaction shikimate + NADP(+) = 3-dehydroshikimate + NADPH + H(+). It participates in metabolic intermediate biosynthesis; chorismate biosynthesis; chorismate from D-erythrose 4-phosphate and phosphoenolpyruvate: step 4/7. Its function is as follows. Involved in the biosynthesis of the chorismate, which leads to the biosynthesis of aromatic amino acids. Catalyzes the reversible NADPH linked reduction of 3-dehydroshikimate (DHSA) to yield shikimate (SA). The chain is Shikimate dehydrogenase (NADP(+)) from Citrobacter koseri (strain ATCC BAA-895 / CDC 4225-83 / SGSC4696).